Here is a 1177-residue protein sequence, read N- to C-terminus: DNA-directed RNA polymerase subunit beta' (1177 aa).

Residues cysteine 60, cysteine 62, cysteine 75, and cysteine 78 each coordinate Zn(2+). The Mg(2+) site is built by aspartate 450, aspartate 452, and aspartate 454. Cysteine 795, cysteine 869, cysteine 876, and cysteine 879 together coordinate Zn(2+).

This sequence belongs to the RNA polymerase beta' chain family. The RNAP catalytic core consists of 2 alpha, 1 beta, 1 beta' and 1 omega subunit. When a sigma factor is associated with the core the holoenzyme is formed, which can initiate transcription. Mg(2+) serves as cofactor. The cofactor is Zn(2+).

It catalyses the reaction RNA(n) + a ribonucleoside 5'-triphosphate = RNA(n+1) + diphosphate. DNA-dependent RNA polymerase catalyzes the transcription of DNA into RNA using the four ribonucleoside triphosphates as substrates. The protein is DNA-directed RNA polymerase subunit beta' of Clostridium botulinum (strain Eklund 17B / Type B).